The following is a 90-amino-acid chain: Photosystem I reaction center subunit PsaK 2 (90 aa).

A run of 2 helical transmembrane segments spans residues 20–42 (LSVGIIMCLCNVFAFVIGYFAIQ) and 67–89 (LATMSFGHILGAGMVLGLASSGI).

Belongs to the PsaG/PsaK family.

It is found in the cellular thylakoid membrane. The protein is Photosystem I reaction center subunit PsaK 2 (psaK2) of Synechocystis sp. (strain ATCC 27184 / PCC 6803 / Kazusa).